The following is an 89-amino-acid chain: Large ribosomal subunit protein bL27 (89 aa).

A disordered region spans residues 1–22 (MAHKKAGGSSRNGRDSAGRRLG).

Belongs to the bacterial ribosomal protein bL27 family.

This is Large ribosomal subunit protein bL27 from Dinoroseobacter shibae (strain DSM 16493 / NCIMB 14021 / DFL 12).